The chain runs to 383 residues: Succinyl-diaminopimelate desuccinylase (383 aa).

His73 is a Zn(2+) binding site. Asp75 is an active-site residue. Position 107 (Asp107) interacts with Zn(2+). Glu141 (proton acceptor) is an active-site residue. Positions 142, 170, and 356 each coordinate Zn(2+).

Belongs to the peptidase M20A family. DapE subfamily. As to quaternary structure, homodimer. It depends on Zn(2+) as a cofactor. Requires Co(2+) as cofactor.

It carries out the reaction N-succinyl-(2S,6S)-2,6-diaminopimelate + H2O = (2S,6S)-2,6-diaminopimelate + succinate. It functions in the pathway amino-acid biosynthesis; L-lysine biosynthesis via DAP pathway; LL-2,6-diaminopimelate from (S)-tetrahydrodipicolinate (succinylase route): step 3/3. In terms of biological role, catalyzes the hydrolysis of N-succinyl-L,L-diaminopimelic acid (SDAP), forming succinate and LL-2,6-diaminopimelate (DAP), an intermediate involved in the bacterial biosynthesis of lysine and meso-diaminopimelic acid, an essential component of bacterial cell walls. This is Succinyl-diaminopimelate desuccinylase from Pseudomonas syringae pv. tomato (strain ATCC BAA-871 / DC3000).